The following is a 195-amino-acid chain: Endoribonuclease YbeY (195 aa).

Residues histidine 152, histidine 156, and histidine 162 each contribute to the Zn(2+) site.

It belongs to the endoribonuclease YbeY family. It depends on Zn(2+) as a cofactor.

It is found in the cytoplasm. Single strand-specific metallo-endoribonuclease involved in late-stage 70S ribosome quality control and in maturation of the 3' terminus of the 16S rRNA. This Rhodopseudomonas palustris (strain BisB5) protein is Endoribonuclease YbeY.